A 209-amino-acid chain; its full sequence is MRPRMWLLLSAQLAALHGNSVLQQTPAYIMVQTNQMVMLSCKAISSSTTRIYWLRQLHAPSSNSHHEILAFWDSSKGTIHSEGVEQKKITVFRDGSLFFLNLTRVKLEDSGTYFCMVIGSPTLIFGTGTQLSVVDILPTTAQTTKKSTPKKTVCRLPRPETRKGPLCSPITLSLLVAGILVLLVSLGVAIHLYCRQRRARLRFMKQFYK.

The N-terminal stretch at 1 to 21 (MRPRMWLLLSAQLAALHGNSV) is a signal peptide. Residues 22-131 (LQQTPAYIMV…TLIFGTGTQL (110 aa)) enclose the Ig-like V-type domain. The Extracellular segment spans residues 22–169 (LQQTPAYIMV…ETRKGPLCSP (148 aa)). Cys41 and Cys115 are oxidised to a cystine. A glycan (N-linked (GlcNAc...) asparagine) is linked at Asn101. A helical membrane pass occupies residues 170–190 (ITLSLLVAGILVLLVSLGVAI). Residues 191–209 (HLYCRQRRARLRFMKQFYK) are Cytoplasmic-facing.

Forms disulfide-linked heterodimers with CD8A at the cell surface. Interacts with CD3D; this interaction couples TCR-CD3 with CD8. Interacts with LCK. Phosphorylated as a consequence of T-cell activation. In terms of processing, palmitoylated at the cytoplasmic tail and thereby targets the heterodimer CD8A/CD8B to lipid rafts unlike CD8A homodimers.

The protein localises to the cell membrane. Integral membrane glycoprotein that plays an essential role in the immune response and serves multiple functions in responses against both external and internal offenses. In T-cells, functions primarily as a coreceptor for MHC class I molecule:peptide complex. The antigens presented by class I peptides are derived from cytosolic proteins while class II derived from extracellular proteins. Interacts simultaneously with the T-cell receptor (TCR) and the MHC class I proteins presented by antigen presenting cells (APCs). In turn, recruits the Src kinase LCK to the vicinity of the TCR-CD3 complex. A palmitoylation site in the cytoplasmic tail of CD8B chain contributes to partitioning of CD8 into the plasma membrane lipid rafts where signaling proteins are enriched. Once LCK recruited, it initiates different intracellular signaling pathways by phosphorylating various substrates ultimately leading to lymphokine production, motility, adhesion and activation of cytotoxic T-lymphocytes (CTLs). Additionally, plays a critical role in thymic selection of CD8+ T-cells. The chain is T-cell surface glycoprotein CD8 beta chain (CD8B) from Saimiri sciureus (Common squirrel monkey).